The sequence spans 466 residues: Soluble pyridine nucleotide transhydrogenase (466 aa).

36 to 45 (ERYHNVGGGC) contributes to the FAD binding site.

The protein belongs to the class-I pyridine nucleotide-disulfide oxidoreductase family. Requires FAD as cofactor.

It localises to the cytoplasm. It catalyses the reaction NAD(+) + NADPH = NADH + NADP(+). Functionally, conversion of NADPH, generated by peripheral catabolic pathways, to NADH, which can enter the respiratory chain for energy generation. The protein is Soluble pyridine nucleotide transhydrogenase of Enterobacter sp. (strain 638).